The primary structure comprises 229 residues: Ribose-5-phosphate isomerase A (229 aa).

Residues 28 to 31 (TGST), 85 to 88 (DGAD), and 98 to 101 (KGRG) contribute to the substrate site. Catalysis depends on E107, which acts as the Proton acceptor. K125 contacts substrate.

This sequence belongs to the ribose 5-phosphate isomerase family. Homodimer.

The enzyme catalyses aldehydo-D-ribose 5-phosphate = D-ribulose 5-phosphate. It functions in the pathway carbohydrate degradation; pentose phosphate pathway; D-ribose 5-phosphate from D-ribulose 5-phosphate (non-oxidative stage): step 1/1. Catalyzes the reversible conversion of ribose-5-phosphate to ribulose 5-phosphate. This Pyrococcus abyssi (strain GE5 / Orsay) protein is Ribose-5-phosphate isomerase A.